The following is a 287-amino-acid chain: Energy-coupling factor transporter ATP-binding protein EcfA2 (287 aa).

Residues 3–246 enclose the ABC transporter domain; that stretch reads VKFSQVSYVY…TNYVNQLHLD (244 aa). Position 40 to 47 (40 to 47) interacts with ATP; that stretch reads GQTGSGKS.

This sequence belongs to the ABC transporter superfamily. Energy-coupling factor EcfA family. In terms of assembly, forms a stable energy-coupling factor (ECF) transporter complex composed of 2 membrane-embedded substrate-binding proteins (S component), 2 ATP-binding proteins (A component) and 2 transmembrane proteins (T component).

It localises to the cell membrane. ATP-binding (A) component of a common energy-coupling factor (ECF) ABC-transporter complex. Unlike classic ABC transporters this ECF transporter provides the energy necessary to transport a number of different substrates. The sequence is that of Energy-coupling factor transporter ATP-binding protein EcfA2 from Staphylococcus saprophyticus subsp. saprophyticus (strain ATCC 15305 / DSM 20229 / NCIMB 8711 / NCTC 7292 / S-41).